The sequence spans 484 residues: Muscarinic acetylcholine receptor M4 (484 aa).

At 1-32 (MENDTWENESSASNHSIDETIVEIPGKYQTME) the chain is on the extracellular side. 3 N-linked (GlcNAc...) asparagine glycosylation sites follow: Asn3, Asn8, and Asn14. Residues 33 to 55 (MIFIATVTGSLSLVTVVGNILVM) form a helical membrane-spanning segment. Topologically, residues 56-69 (LSIKVNRQLQTVNN) are cytoplasmic. The chain crosses the membrane as a helical span at residues 70 to 90 (YFLFSLACADLIIGVFSMNLY). The Extracellular segment spans residues 91–107 (SLYIIKGYWPLGPIVCD). Cys106 and Cys186 are joined by a disulfide. The chain crosses the membrane as a helical span at residues 108 to 129 (LWLALDYVVSNASVMNLLIISL). Over 130–149 (ERXFCVTKPLTYPARRTTKM) the chain is Cytoplasmic. A helical transmembrane segment spans residues 150–172 (AGLMIAAAWLLSFELWAPAILFW). Residues 173–194 (QFIVGQRTVPSGECYIQFLSNP) are Extracellular-facing. The helical transmembrane segment at 195-217 (AVTFGTAIAAFYLPVVIMTILYI) threads the bilayer. At 218–406 (HISLASRSRV…AAREKKVTRT (189 aa)) the chain is on the cytoplasmic side. The tract at residues 255–316 (NIPKQDAGDK…EKQPLSEASS (62 aa)) is disordered. A compositionally biased stretch (basic and acidic residues) spans 260 to 270 (DAGDKVVEKKN). A helical transmembrane segment spans residues 407 to 427 (IFAILLAFIITWTPYNVMVLI). Topologically, residues 428 to 441 (NTFCQTCIPETIWY) are extracellular. Residues 442 to 461 (IGYWLCYVNSTINPACYALC) form a helical membrane-spanning segment. The Cytoplasmic segment spans residues 462–484 (NATFKKTFKHLLMCQYKSIGTAR).

It belongs to the G-protein coupled receptor 1 family. Muscarinic acetylcholine receptor subfamily. CHRM4 sub-subfamily.

The protein localises to the cell membrane. It is found in the postsynaptic cell membrane. Functionally, the muscarinic acetylcholine receptor mediates various cellular responses, including inhibition of adenylate cyclase, breakdown of phosphoinositides and modulation of potassium channels through the action of G proteins. Primary transducing effect is inhibition of adenylate cyclase. This chain is Muscarinic acetylcholine receptor M4 (chrm4), found in Xenopus laevis (African clawed frog).